The sequence spans 190 residues: Translation machinery-associated protein 22 (190 aa).

The tract at residues Leu-63 to Glu-83 is disordered. One can recognise an SUI1 domain in the interval Val-99–Phe-170.

The protein belongs to the DENR family. Interacts with the 40S ribosomal subunit.

The protein resides in the cytoplasm. The sequence is that of Translation machinery-associated protein 22 (tma22) from Schizosaccharomyces pombe (strain 972 / ATCC 24843) (Fission yeast).